Consider the following 461-residue polypeptide: Photosystem II CP43 reaction center protein (461 aa).

Positions Met-1 to Glu-2 are excised as a propeptide. Thr-3 is subject to N-acetylthreonine. Position 3 is a phosphothreonine (Thr-3). A run of 5 helical transmembrane segments spans residues Leu-57–Ala-81, Leu-122–Asn-143, Lys-166–Thr-188, Lys-243–Ser-263, and Trp-279–Ala-300. Residue Glu-355 participates in [CaMn4O5] cluster binding. A helical transmembrane segment spans residues Arg-435 to Pro-459.

The protein belongs to the PsbB/PsbC family. PsbC subfamily. As to quaternary structure, PSII is composed of 1 copy each of membrane proteins PsbA, PsbB, PsbC, PsbD, PsbE, PsbF, PsbH, PsbI, PsbJ, PsbK, PsbL, PsbM, PsbT, PsbX, PsbY, PsbZ, Psb30/Ycf12, at least 3 peripheral proteins of the oxygen-evolving complex and a large number of cofactors. It forms dimeric complexes. Binds multiple chlorophylls and provides some of the ligands for the Ca-4Mn-5O cluster of the oxygen-evolving complex. It may also provide a ligand for a Cl- that is required for oxygen evolution. PSII binds additional chlorophylls, carotenoids and specific lipids. is required as a cofactor.

Its subcellular location is the plastid. The protein localises to the chloroplast thylakoid membrane. Functionally, one of the components of the core complex of photosystem II (PSII). It binds chlorophyll and helps catalyze the primary light-induced photochemical processes of PSII. PSII is a light-driven water:plastoquinone oxidoreductase, using light energy to abstract electrons from H(2)O, generating O(2) and a proton gradient subsequently used for ATP formation. The chain is Photosystem II CP43 reaction center protein from Nicotiana sylvestris (Wood tobacco).